Here is a 160-residue protein sequence, read N- to C-terminus: Sulfur-rich protein (160 aa).

The next 2 membrane-spanning stretches (helical) occupy residues 62 to 82 (ITMV…TFVL) and 91 to 111 (FLFL…SVFM).

The protein resides in the membrane. In Chlamydia caviae (strain ATCC VR-813 / DSM 19441 / 03DC25 / GPIC) (Chlamydophila caviae), this protein is Sulfur-rich protein (srp).